A 266-amino-acid chain; its full sequence is Very-long-chain aldehyde decarbonylase GL1-11 (266 aa).

Helical transmembrane passes span 25-45, 74-94, 106-126, and 163-183; these read VVTF…SLLF, ILYH…AFKF, WTVI…IFYW, and ILFL…HLFT. Residues 113–248 enclose the Fatty acid hydroxylase domain; it reads VLFYFVLEDF…FVYMDWLFGT (136 aa).

Belongs to the sterol desaturase family. Homodimer.

The protein resides in the endoplasmic reticulum membrane. It carries out the reaction a long-chain fatty aldehyde + 2 NADPH + O2 + H(+) = a long-chain alkane + formate + 2 NADP(+) + H2O. Functionally, aldehyde decarbonylase involved in the conversion of aldehydes to alkanes. Core component of a very-long-chain alkane synthesis complex. This Oryza sativa subsp. indica (Rice) protein is Very-long-chain aldehyde decarbonylase GL1-11.